The primary structure comprises 290 residues: tRNA pseudouridine synthase A (290 aa).

D56 (nucleophile) is an active-site residue. A substrate-binding site is contributed by Y109.

The protein belongs to the tRNA pseudouridine synthase TruA family.

It carries out the reaction uridine(38/39/40) in tRNA = pseudouridine(38/39/40) in tRNA. Functionally, formation of pseudouridine at positions 38, 39 and 40 in the anticodon stem and loop of transfer RNAs. The sequence is that of tRNA pseudouridine synthase A from Methanobrevibacter smithii (strain ATCC 35061 / DSM 861 / OCM 144 / PS).